A 249-amino-acid chain; its full sequence is Cobalt transport protein CbiM (249 aa).

Residues 1-27 form the signal peptide; it reads MKPLHRWLPVVIGAALLIIFESRAAYA. Helical transmembrane passes span 33-53, 70-90, 102-122, 134-154, 161-181, and 207-227; these read GFLPPVWAGFWFIVVLPFWVL, LLLGFAAAFAFVLSALKIPSV, LGTILFGPLVMSVLGSIVLLF, TLGANAFSMAVVGPFVAWLIW, APIWLTVFLAAALADLFTYVV, and IFAVTQIPLAISEGILTVLIF.

Belongs to the CbiM family. Forms an energy-coupling factor (ECF) transporter complex composed of an ATP-binding protein (A component, CbiO), a transmembrane protein (T component, CbiQ) and 2 possible substrate-capture proteins (S components, CbiM and CbiN) of unknown stoichimetry.

It is found in the cell membrane. It participates in cofactor biosynthesis; adenosylcobalamin biosynthesis. Its function is as follows. Part of the energy-coupling factor (ECF) transporter complex CbiMNOQ involved in cobalt import. The polypeptide is Cobalt transport protein CbiM (Roseiflexus sp. (strain RS-1)).